The sequence spans 243 residues: Phosphoadenosine 5'-phosphosulfate reductase (243 aa).

The active-site Nucleophile; cysteine thiosulfonate intermediate is the Cys239.

It belongs to the PAPS reductase family. CysH subfamily.

It localises to the cytoplasm. The enzyme catalyses [thioredoxin]-disulfide + sulfite + adenosine 3',5'-bisphosphate + 2 H(+) = [thioredoxin]-dithiol + 3'-phosphoadenylyl sulfate. Its pathway is sulfur metabolism; hydrogen sulfide biosynthesis; sulfite from sulfate: step 3/3. Functionally, catalyzes the formation of sulfite from phosphoadenosine 5'-phosphosulfate (PAPS) using thioredoxin as an electron donor. The chain is Phosphoadenosine 5'-phosphosulfate reductase from Erwinia tasmaniensis (strain DSM 17950 / CFBP 7177 / CIP 109463 / NCPPB 4357 / Et1/99).